A 362-amino-acid polypeptide reads, in one-letter code: Aminomethyltransferase (362 aa).

It belongs to the GcvT family. The glycine cleavage system is composed of four proteins: P, T, L and H.

The catalysed reaction is N(6)-[(R)-S(8)-aminomethyldihydrolipoyl]-L-lysyl-[protein] + (6S)-5,6,7,8-tetrahydrofolate = N(6)-[(R)-dihydrolipoyl]-L-lysyl-[protein] + (6R)-5,10-methylene-5,6,7,8-tetrahydrofolate + NH4(+). The glycine cleavage system catalyzes the degradation of glycine. This Chloroherpeton thalassium (strain ATCC 35110 / GB-78) protein is Aminomethyltransferase.